The sequence spans 188 residues: UPF0314 protein Sala_3154 (188 aa).

Transmembrane regions (helical) follow at residues 8 to 28 (TGWL…IFMG), 57 to 77 (WYSF…RWIM), and 143 to 163 (MRWW…LWTI).

Belongs to the UPF0314 family.

The protein resides in the cell membrane. This is UPF0314 protein Sala_3154 from Sphingopyxis alaskensis (strain DSM 13593 / LMG 18877 / RB2256) (Sphingomonas alaskensis).